The chain runs to 600 residues: Cytidine monophosphate-N-acetylneuraminic acid hydroxylase (600 aa).

The Rieske domain maps to 9 to 107; it reads LSPVEVASLK…VEMDENNRLL (99 aa). The [2Fe-2S] cluster site is built by C49, H51, C70, and H73.

It belongs to the CMP-Neu5Ac hydroxylase family. [2Fe-2S] cluster serves as cofactor.

Its subcellular location is the cytoplasm. The enzyme catalyses CMP-N-acetyl-beta-neuraminate + 2 Fe(II)-[cytochrome b5] + O2 + 2 H(+) = CMP-N-glycoloyl-beta-neuraminate + 2 Fe(III)-[cytochrome b5] + H2O. The protein operates within amino-sugar metabolism; N-acetylneuraminate metabolism. Sialic acids are components of carbohydrate chains of glycoconjugates and are involved in cell-cell recognition and cell-pathogen interactions. Catalyzes the conversion of CMP-N-acetylneuraminic acid (CMP-Neu5Ac) into its hydroxylated derivative CMP-N-glycolylneuraminic acid (CMP-Neu5Gc), a sialic acid abundantly expressed at the surface of many cells. This is Cytidine monophosphate-N-acetylneuraminic acid hydroxylase (CMAH) from Pan paniscus (Pygmy chimpanzee).